The sequence spans 1127 residues: DNA-directed RNA polymerase I subunit RPA2 homolog (1127 aa).

Ser-1025 carries the post-translational modification Phosphoserine.

Belongs to the RNA polymerase beta chain family. In terms of assembly, component of the RNA polymerase I (Pol I) complex consisting of at least 13 subunits.

It is found in the nucleus. The protein resides in the nucleolus. The enzyme catalyses RNA(n) + a ribonucleoside 5'-triphosphate = RNA(n+1) + diphosphate. Antisense ribosomal siRNAs silence rRNA expression during the elongation phase by decreasing rpoa-2 occupancy downstream of the RNAi-targeted region in nrde-2-dependent manner. Its function is as follows. DNA-dependent RNA polymerase catalyzes the transcription of DNA into RNA using the four ribonucleoside triphosphates as substrates. Second largest core component of RNA polymerase I which synthesizes ribosomal RNA precursors. Proposed to contribute to the polymerase catalytic activity and forms the polymerase active center together with the largest subunit. Pol I is composed of mobile elements and RPA2 is part of the core element with the central large cleft and probably a clamp element that moves to open and close the cleft. Specifically binds to 18S, 5.8S and 26S rDNA, but not to 5S rDNA. The protein is DNA-directed RNA polymerase I subunit RPA2 homolog of Caenorhabditis elegans.